The chain runs to 44 residues: MTTKFVFDLLAPDDILHPFNHVKLIIIRPIEVEHIIIATTMPAV.

It belongs to the coronaviruses ns4.9 protein family.

The sequence is that of Non-structural protein of 4.9 kDa from Bovine coronavirus (strain LY-138) (BCoV).